We begin with the raw amino-acid sequence, 220 residues long: MLKLHGFSVSNYYNMVKLALLEKGLPFEEVTFYGGQAPQALEVSPRGKVPVLETEHGFLSETSVILDYIEQTQSGKALLPADPFEQAKVRELLKEIELYIELPARTCYAESFFGMSVEPLIKEKARADLLAGFATLKRNGRFAPYVAGEQLTLADLMFCFSVDLANAVGKKVLSIDFLADFPQAKALLQLMGENPHMARIMADKEASMPAFMEMIRSGKR.

In terms of domain architecture, GST N-terminal spans methionine 1–alanine 77. Glutathione contacts are provided by residues tyrosine 12, valine 49, and glutamate 61–threonine 62. One can recognise a GST C-terminal domain in the interval aspartate 82 to phenylalanine 211.

Belongs to the GST superfamily. In terms of assembly, monomer and homodimer.

Its subcellular location is the cytoplasm. It catalyses the reaction RX + glutathione = an S-substituted glutathione + a halide anion + H(+). Conjugation of reduced glutathione to a wide number of exogenous and endogenous hydrophobic electrophiles. The protein is Glutathione S-transferase of Pseudomonas putida (strain ATCC 700007 / DSM 6899 / JCM 31910 / BCRC 17059 / LMG 24140 / F1).